A 361-amino-acid chain; its full sequence is Mannose-1-phosphate guanylyltransferase 1 (361 aa).

GDP-alpha-D-mannose-binding residues include L6 and V7. Diphosphate is bound by residues G9, G11, T12, R13, and K23. G85, N109, D111, G146, and N173 together coordinate GDP-alpha-D-mannose.

This sequence belongs to the transferase hexapeptide repeat family. Interacts in vitro with CSN5A and CSN5B, but in planta only with CSN5B, which targets CYT1 for degradation in the dark by the 26S proteasome. Forms homodimers in the unliganded structure. The product-bound structure is composed of six dimers that form a dodecameric assembly.

The protein localises to the cytoplasm. Its subcellular location is the nucleus. The enzyme catalyses alpha-D-mannose 1-phosphate + GTP + H(+) = GDP-alpha-D-mannose + diphosphate. It participates in nucleotide-sugar biosynthesis; GDP-alpha-D-mannose biosynthesis; GDP-alpha-D-mannose from alpha-D-mannose 1-phosphate (GTP route): step 1/1. Essential protein during embryogenesis. Catalyzes a reaction of the Smirnoff-Wheeler pathway, the major route to ascorbate biosynthesis in plants. Plays an essential role in plant growth and development and cell-wall architecture. Provides GDP-mannose, used for cell wall carbohydrate biosynthesis, protein N-glycosylation, as well as for the biosynthesis of the antioxidant ascorbate. The protein is Mannose-1-phosphate guanylyltransferase 1 of Arabidopsis thaliana (Mouse-ear cress).